A 131-amino-acid polypeptide reads, in one-letter code: Leptin receptor gene-related protein (131 aa).

4 consecutive transmembrane segments (helical) span residues 7 to 27 (LVGL…GCAL), 32 to 52 (VYWP…HFIA), 69 to 89 (LAYF…IILA), and 100 to 120 (GLVL…FLVF).

This sequence belongs to the OB-RGRP/VPS55 family.

The protein localises to the golgi apparatus membrane. Its subcellular location is the endosome membrane. Involved in protein trafficking. May be involved in the down-regulation of membrane protein levels. This chain is Leptin receptor gene-related protein (LEPROT), found in Gallus gallus (Chicken).